Reading from the N-terminus, the 83-residue chain is Large ribosomal subunit protein bL28 (83 aa).

The protein belongs to the bacterial ribosomal protein bL28 family.

The sequence is that of Large ribosomal subunit protein bL28 from Amoebophilus asiaticus (strain 5a2).